Here is a 183-residue protein sequence, read N- to C-terminus: Glutathione-regulated potassium-efflux system ancillary protein KefG (183 aa).

Belongs to the NAD(P)H dehydrogenase (quinone) family. KefG subfamily. In terms of assembly, interacts with KefB.

It localises to the cell inner membrane. It carries out the reaction a quinone + NADH + H(+) = a quinol + NAD(+). The enzyme catalyses a quinone + NADPH + H(+) = a quinol + NADP(+). In terms of biological role, regulatory subunit of a potassium efflux system that confers protection against electrophiles. Required for full activity of KefB. The polypeptide is Glutathione-regulated potassium-efflux system ancillary protein KefG (Escherichia coli O6:K15:H31 (strain 536 / UPEC)).